The primary structure comprises 77 residues: DNA-directed RNA polymerase subunit omega (77 aa).

This sequence belongs to the RNA polymerase subunit omega family. In terms of assembly, in cyanobacteria the RNAP catalytic core is composed of 2 alpha, 1 beta, 1 beta', 1 gamma and 1 omega subunit. When a sigma factor is associated with the core the holoenzyme is formed, which can initiate transcription.

The enzyme catalyses RNA(n) + a ribonucleoside 5'-triphosphate = RNA(n+1) + diphosphate. In terms of biological role, promotes RNA polymerase assembly. Latches the N- and C-terminal regions of the beta' subunit thereby facilitating its interaction with the beta and alpha subunits. In Thermosynechococcus vestitus (strain NIES-2133 / IAM M-273 / BP-1), this protein is DNA-directed RNA polymerase subunit omega.